We begin with the raw amino-acid sequence, 38 residues long: Photosystem II reaction center protein L (38 aa).

Residues 17-37 (SLFLGRLLIFVLGILFSSYIF) traverse the membrane as a helical segment.

The protein belongs to the PsbL family. As to quaternary structure, PSII is composed of 1 copy each of membrane proteins PsbA, PsbB, PsbC, PsbD, PsbE, PsbF, PsbH, PsbI, PsbJ, PsbK, PsbL, PsbM, PsbT, PsbX, PsbY, PsbZ, Psb30/Ycf12, peripheral proteins PsbO, CyanoQ (PsbQ), PsbU, PsbV and a large number of cofactors. It forms dimeric complexes.

The protein localises to the cellular thylakoid membrane. Functionally, one of the components of the core complex of photosystem II (PSII). PSII is a light-driven water:plastoquinone oxidoreductase that uses light energy to abstract electrons from H(2)O, generating O(2) and a proton gradient subsequently used for ATP formation. It consists of a core antenna complex that captures photons, and an electron transfer chain that converts photonic excitation into a charge separation. This subunit is found at the monomer-monomer interface and is required for correct PSII assembly and/or dimerization. The polypeptide is Photosystem II reaction center protein L (Prochlorothrix hollandica).